The chain runs to 432 residues: Protein trichome birefringence-like 23 (432 aa).

The chain crosses the membrane as a helical; Signal-anchor for type II membrane protein span at residues Gln13 to Val35. Positions Gly153–Ser155 match the GDS motif motif. A DCXHWCLPGXXDXWN motif motif is present at residues Asp404–Asn418.

It belongs to the PC-esterase family. TBL subfamily.

Its subcellular location is the membrane. Its function is as follows. May act as a bridging protein that binds pectin and other cell wall polysaccharides. Probably involved in maintaining esterification of pectins. May be involved in the specific O-acetylation of cell wall polymers. The polypeptide is Protein trichome birefringence-like 23 (TBL23) (Arabidopsis thaliana (Mouse-ear cress)).